The chain runs to 56 residues: Large ribosomal subunit protein bL32 (56 aa).

Residues 1–16 (MAVQKSKKSRARRGMR) are compositionally biased toward basic residues. The disordered stretch occupies residues 1–56 (MAVQKSKKSRARRGMRRSHDAISGPSLTVDQTSGETHRRHHVTADGYYKGVQVISK). Residues 25 to 34 (PSLTVDQTSG) show a composition bias toward polar residues.

This sequence belongs to the bacterial ribosomal protein bL32 family.

The protein is Large ribosomal subunit protein bL32 of Pseudoalteromonas translucida (strain TAC 125).